The sequence spans 264 residues: Small ribosomal subunit protein eS1 (264 aa).

The segment at 233–264 (GEGGGAGKPSGDEAGAKVERADGYEPPVQESV) is disordered. Positions 242–255 (SGDEAGAKVERADG) are enriched in basic and acidic residues.

This sequence belongs to the eukaryotic ribosomal protein eS1 family. In terms of assembly, component of the small ribosomal subunit. Mature ribosomes consist of a small (40S) and a large (60S) subunit. The 40S subunit contains about 33 different proteins and 1 molecule of RNA (18S). The 60S subunit contains about 49 different proteins and 3 molecules of RNA (25S, 5.8S and 5S).

Its subcellular location is the cytoplasm. The sequence is that of Small ribosomal subunit protein eS1 from Eimeria tenella (Coccidian parasite).